Reading from the N-terminus, the 134-residue chain is Small ribosomal subunit protein uS9 (134 aa).

The segment at 114–134 (QKEAKNFGGPGARSKYQKSYR) is disordered.

Belongs to the universal ribosomal protein uS9 family.

The chain is Small ribosomal subunit protein uS9 from Methanosarcina mazei (strain ATCC BAA-159 / DSM 3647 / Goe1 / Go1 / JCM 11833 / OCM 88) (Methanosarcina frisia).